The chain runs to 868 residues: E3 ubiquitin-protein ligase TRIM71 (868 aa).

Alanine 2 is subject to N-acetylalanine. The RING-type zinc-finger motif lies at 12 to 89 (CLLCKEMCGS…PLKLRCPVCD (78 aa)). The segment covering 26 to 41 (SSNSSASSSSSQTSTS) has biased composition (low complexity). 2 disordered regions span residues 26–50 (SSNS…GGPG) and 121–186 (ADEP…GSPS). The segment covering 142–153 (SNHRHHAHHAHP) has biased composition (basic residues). The span at 159–176 (APPPPLPPAPPPPAPPRS) shows a compositional bias: pro residues. The span at 177-186 (APGGPAGSPS) shows a compositional bias: low complexity. A B box-type 1; atypical zinc finger spans residues 191-238 (RRPHGCSSCDEGNAASSRCLDCQEHLCDNCVRAHQRVRLTKDHYIERG). The B box-type 2 zinc finger occupies 273-314 (ERLGFCQHHDDEVLHLYCDTCSVPICRECTVGRHGGHSFVYL). Positions 278, 281, 301, and 306 each coordinate Zn(2+). Residues 391–427 (QVKAKSLYLQVEKLRQNLNKLESTISAVQQVLEEGRA) adopt a coiled-coil conformation. One copy of the Filamin repeat lies at 479 to 580 (SSGAFAPLTK…IENSPFKVVV (102 aa)). NHL repeat units follow at residues 593-636 (GLSF…FKPC), 640-683 (HHKF…FTFE), 687-730 (LLKF…FGPD), 734-777 (LNKY…IHPD), 781-824 (ARFL…FESN), and 828-868 (LCKF…ILIF).

Belongs to the TRIM/RBCC family. As to quaternary structure, interacts (via NHL repeats) with AGO2; the interaction increases in presence of RNA. Interacts with HSP90AA1. Interacts (via NHL repeats) with MOV10, PABPC1, PUM1, PUM2, STAU2, XRN1 and XRN2 in an RNA-dependent manner. Interacts with SHCBP1; leading to enhance its stability. In terms of processing, autoubiquitinated.

It localises to the cytoplasm. Its subcellular location is the P-body. It carries out the reaction S-ubiquitinyl-[E2 ubiquitin-conjugating enzyme]-L-cysteine + [acceptor protein]-L-lysine = [E2 ubiquitin-conjugating enzyme]-L-cysteine + N(6)-ubiquitinyl-[acceptor protein]-L-lysine.. The protein operates within protein modification; protein ubiquitination. In terms of biological role, E3 ubiquitin-protein ligase that cooperates with the microRNAs (miRNAs) machinery and promotes embryonic stem cells proliferation and maintenance. Binds to miRNAs and associates with AGO2, participating in post-transcriptional repression of transcripts such as CDKN1A. In addition, participates in post-transcriptional mRNA repression in a miRNA independent mechanism. Facilitates the G1-S transition to promote rapid embryonic stem cell self-renewal by repressing CDKN1A expression. Required to maintain proliferation and prevent premature differentiation of neural progenitor cells during early neural development: positively regulates FGF signaling by controlling the stability of SHCBP1. Specific regulator of miRNA biogenesis. Binds to miRNA MIR29A hairpin and postranscriptionally modulates MIR29A levels, which indirectly regulates TET proteins expression. In Bos taurus (Bovine), this protein is E3 ubiquitin-protein ligase TRIM71 (TRIM71).